Here is a 218-residue protein sequence, read N- to C-terminus: Small ribosomal subunit protein uS3c (218 aa).

One can recognise a KH type-2 domain in the interval 47-118 (VQKNMRTSSG…KLNIAVTRIA (72 aa)).

This sequence belongs to the universal ribosomal protein uS3 family. As to quaternary structure, part of the 30S ribosomal subunit.

It is found in the plastid. The protein localises to the chloroplast. The chain is Small ribosomal subunit protein uS3c (rps3) from Nicotiana tomentosiformis (Tobacco).